We begin with the raw amino-acid sequence, 128 residues long: Large ribosomal subunit protein bL12 (128 aa).

The protein belongs to the bacterial ribosomal protein bL12 family. As to quaternary structure, homodimer. Part of the ribosomal stalk of the 50S ribosomal subunit. Forms a multimeric L10(L12)X complex, where L10 forms an elongated spine to which 2 to 4 L12 dimers bind in a sequential fashion. Binds GTP-bound translation factors.

In terms of biological role, forms part of the ribosomal stalk which helps the ribosome interact with GTP-bound translation factors. Is thus essential for accurate translation. In Synechococcus sp. (strain CC9902), this protein is Large ribosomal subunit protein bL12.